We begin with the raw amino-acid sequence, 329 residues long: Eukaryotic translation initiation factor 3 subunit I (329 aa).

WD repeat units follow at residues 8 to 47 (GHQR…RLGT), 50 to 89 (GHGG…NIAT), 145 to 184 (ITDS…KIHS), 187 to 226 (EHTH…LLKE), and 284 to 323 (GHFG…FDYT).

Belongs to the eIF-3 subunit I family. Component of the eukaryotic translation initiation factor 3 (eIF-3) complex.

It is found in the cytoplasm. In terms of biological role, component of the eukaryotic translation initiation factor 3 (eIF-3) complex, which is involved in protein synthesis of a specialized repertoire of mRNAs and, together with other initiation factors, stimulates binding of mRNA and methionyl-tRNAi to the 40S ribosome. The eIF-3 complex specifically targets and initiates translation of a subset of mRNAs involved in cell proliferation. In Bombyx mori (Silk moth), this protein is Eukaryotic translation initiation factor 3 subunit I.